An 861-amino-acid polypeptide reads, in one-letter code: Isoleucine--tRNA ligase (861 aa).

Positions 57–67 match the 'HIGH' region motif; sequence PYANGNIHVGH. E549 lines the L-isoleucyl-5'-AMP pocket. The 'KMSKS' region motif lies at 590 to 594; it reads KMSKS. K593 is a binding site for ATP.

It belongs to the class-I aminoacyl-tRNA synthetase family. IleS type 1 subfamily. Monomer.

It is found in the cytoplasm. It catalyses the reaction tRNA(Ile) + L-isoleucine + ATP = L-isoleucyl-tRNA(Ile) + AMP + diphosphate. Catalyzes the attachment of isoleucine to tRNA(Ile). As IleRS can inadvertently accommodate and process structurally similar amino acids such as valine, to avoid such errors it has two additional distinct tRNA(Ile)-dependent editing activities. One activity is designated as 'pretransfer' editing and involves the hydrolysis of activated Val-AMP. The other activity is designated 'posttransfer' editing and involves deacylation of mischarged Val-tRNA(Ile). This chain is Isoleucine--tRNA ligase, found in Mycoplasma pneumoniae (strain ATCC 29342 / M129 / Subtype 1) (Mycoplasmoides pneumoniae).